The sequence spans 123 residues: DNA-directed RNA polymerase I subunit RPA12 (123 aa).

The Zn(2+) site is built by Cys17, Cys20, Cys35, Cys38, Cys84, and Cys87. The segment at 17–38 (CPDCGSVLPLPGVQDAVACTRC) adopts a C4-type zinc-finger fold. The TFIIS-type zinc-finger motif lies at 80 to 120 (VDRRCSRCGHEGMAYHTRQMRSADEGQTVFYTCTNCKFQEK). A Hairpin motif is present at residues 103-104 (DE). Zn(2+) is bound by residues Cys112 and Cys115.

The protein belongs to the archaeal RpoM/eukaryotic RPA12/RPB9/RPC11 RNA polymerase family. Component of the RNA polymerase I (Pol I) complex consisting of at least 13 subunits.

It localises to the nucleus. The protein resides in the nucleolus. Functionally, core component of RNA polymerase I (Pol I), a DNA-dependent RNA polymerase which synthesizes ribosomal RNA precursors using the four ribonucleoside triphosphates as substrates. Can mediate Pol I proofreading of the nascent RNA transcript. Anchors into the Pol I active site to monitor transcription fidelity and cleave mis-incorporated 5'-ribonucleotides. In Bos taurus (Bovine), this protein is DNA-directed RNA polymerase I subunit RPA12.